The sequence spans 420 residues: Serine hydroxymethyltransferase (420 aa).

(6S)-5,6,7,8-tetrahydrofolate contacts are provided by residues Leu121 and 125-127 (GHL). Lys229 is subject to N6-(pyridoxal phosphate)lysine. Position 355-357 (355-357 (SPF)) interacts with (6S)-5,6,7,8-tetrahydrofolate.

It belongs to the SHMT family. Homodimer. The cofactor is pyridoxal 5'-phosphate.

The protein resides in the cytoplasm. It catalyses the reaction (6R)-5,10-methylene-5,6,7,8-tetrahydrofolate + glycine + H2O = (6S)-5,6,7,8-tetrahydrofolate + L-serine. Its pathway is one-carbon metabolism; tetrahydrofolate interconversion. The protein operates within amino-acid biosynthesis; glycine biosynthesis; glycine from L-serine: step 1/1. Its function is as follows. Catalyzes the reversible interconversion of serine and glycine with tetrahydrofolate (THF) serving as the one-carbon carrier. This reaction serves as the major source of one-carbon groups required for the biosynthesis of purines, thymidylate, methionine, and other important biomolecules. Also exhibits THF-independent aldolase activity toward beta-hydroxyamino acids, producing glycine and aldehydes, via a retro-aldol mechanism. This Chromohalobacter salexigens (strain ATCC BAA-138 / DSM 3043 / CIP 106854 / NCIMB 13768 / 1H11) protein is Serine hydroxymethyltransferase.